A 400-amino-acid chain; its full sequence is Ribose-phosphate pyrophosphokinase 2, chloroplastic (400 aa).

Residues 1-44 constitute a chloroplast transit peptide; that stretch reads MASLALTSPPSVKIPSYLSSSSSSLFSRSSISFRTTESRSRICV. 4 residues coordinate Mg(2+): aspartate 214, histidine 216, aspartate 225, and aspartate 229. The binding of phosphoribosylpyrophosphate stretch occupies residues 300 to 315; sequence GKVAVMVDDIIDTAGT.

Belongs to the ribose-phosphate pyrophosphokinase family.

Its subcellular location is the plastid. It is found in the chloroplast. The catalysed reaction is D-ribose 5-phosphate + ATP = 5-phospho-alpha-D-ribose 1-diphosphate + AMP + H(+). The sequence is that of Ribose-phosphate pyrophosphokinase 2, chloroplastic (PRS2) from Arabidopsis thaliana (Mouse-ear cress).